A 508-amino-acid polypeptide reads, in one-letter code: Cytochrome P450 monooxygenase BipB (508 aa).

Residues 11-31 (ELAWLLLGPLVLFYVFKLFIY) traverse the membrane as a helical segment. Cysteine 448 provides a ligand contact to heme.

This sequence belongs to the cytochrome P450 family. The cofactor is heme.

It is found in the membrane. The protein operates within sesquiterpene biosynthesis. In terms of biological role, cytochrome P450 monooxygenase; part of the minimal biosynthetic bip cluster that mediates the biosynthesis of bridged polycyclic sesquiterpenoids derived from sativene, isosativene, and longifolene. The sesquiterpene cyclase BipA acts as a versatile cyclase that converts farnesyl diphosphate (FPP) into (-)-sativene as the dominant product and (-)-isosativene and (-)-longifolene as minor ones. The cytochrome P450 monooxygenase BipB then hydroxylates different enantiomeric sesquiterpenes, such as (-)-longifolene and (+)-longifolene, at C-15 and C-14. The C-15- or both C-15- and C-14-hydroxylated products are further oxidized by unclustered oxidases, resulting in a structurally diverse array of sesquiterpenoids. The BipB-catalyzed hydroxylation at C-15 serves as an initiator for the oxidation by the unclustered oxidases. This is Cytochrome P450 monooxygenase BipB from Cochliobolus sativus (Common root rot and spot blotch fungus).